Reading from the N-terminus, the 500-residue chain is NF-kappa-B inhibitor epsilon (500 aa).

Residues 1–10 (MNQRRSESRP) show a composition bias toward basic and acidic residues. Disordered regions lie at residues 1-66 (MNQR…PAWA), 84-215 (LSSL…YGSS), and 222-241 (SLLGGPEAEDPAPRLPLPHV). 3 positions are modified to phosphoserine: Ser-157, Ser-161, and Ser-183. The span at 161–186 (SLRSLRSLPESTSAPASGPSDGSPQP) shows a compositional bias: low complexity. The span at 196–209 (EPQEKEDADGERAD) shows a compositional bias: basic and acidic residues. ANK repeat units follow at residues 258–291 (DGDTLVHLAVIHEAPAVLLCCLALLPQEVLDIQN), 293–322 (LYQTALHLAVHLDQPGAVRALVLKGASRAL), 326–355 (HGDTALHVACQRQHLACARCLLEGRPEPGR), 369–398 (QGLACLHIATLQKNQPLMELLLRNGADIDV), 403–432 (SGKTALHLAVETQERGLVQFLLQAGAQVDA), and 436–465 (NGCTPLHLAAGRGLMGISSTLCKAGADSLL).

This sequence belongs to the NF-kappa-B inhibitor family. Interacts with RELA, REL, NFKB1 nuclear factor NF-kappa-B p50 subunit and NFKB2 nuclear factor NF-kappa-B p52 subunit. Interacts with HNRNPA2B1; the interaction may be mediated by the RRM2 domain of HNRNPA2B1, and HNRNPA2B1 may interact simultaneously with FAM76B and either NFKBIA or NFKBIE to form a complex. In terms of processing, serine phosphorylated; followed by proteasome-dependent degradation. In terms of tissue distribution, highly expressed in spleen, testis and lung, followed by kidney, pancreas, heart, placenta and brain. Also expressed in granulocytes and macrophages.

It is found in the cytoplasm. Sequesters NF-kappa-B transcription factor complexes in the cytoplasm, thereby inhibiting their activity. Sequestered complexes include NFKB1-RELA (p50-p65) and NFKB1-REL (p50-c-Rel) complexes. Limits B-cell activation in response to pathogens, and also plays an important role in B-cell development. The polypeptide is NF-kappa-B inhibitor epsilon (NFKBIE) (Homo sapiens (Human)).